Here is a 194-residue protein sequence, read N- to C-terminus: Transmembrane protein 212 (194 aa).

The next 5 helical transmembrane spans lie at 11–31 (ILVTLGILSVCSGVIAFFPVF), 44–64 (IACPIWNGALAITTGVLLLLA), 76–96 (ATFTFVILSIMGCPLHFAIAL), 99–119 (ALLGPYCFYSFSGIAGTNYLG), and 148–168 (LQALDLCLSFTLLCTSLTVFI).

It localises to the membrane. This Homo sapiens (Human) protein is Transmembrane protein 212 (TMEM212).